Reading from the N-terminus, the 96-residue chain is Conantokin Rl-B (96 aa).

A signal peptide spans 1-21 (MQLYTYLYLLVPLVTFHLILG). Residues 22 to 78 (TGTLDHGDALTERRSTDATALKPEPVLLQKSSARSTNDNGKDTQMKRILKKRGNKAR) constitute a propeptide that is removed on maturation. Residues 51–96 (KSSARSTNDNGKDTQMKRILKKRGNKARGEEELAEKAPEFARELAN) are disordered. Residues 77-96 (ARGEEELAEKAPEFARELAN) are compositionally biased toward basic and acidic residues. An a divalent metal cation-binding site is contributed by glutamate 81. 4-carboxyglutamate is present on residues glutamate 81, glutamate 82, and glutamate 85. Glutamate 85 is an a divalent metal cation binding site. 4-hydroxyproline is present on proline 88. Residues glutamate 89 and glutamate 93 each contribute to the a divalent metal cation site. Residues glutamate 89 and glutamate 93 each carry the 4-carboxyglutamate modification. Asparagine 96 carries the post-translational modification Asparagine amide.

Belongs to the conotoxin B superfamily. Ca(2+) is required as a cofactor. The cofactor is Mg(2+). Post-translationally, hydroxylation of Pro-88 is important for NR2B/GRIN2B NMDA receptor selectivity. Removal of hydroxylation does not change global NMDA receptor antagonism (tested on WT neurons), but it decreases the inhibitory potency on NR2B/GRIN2B NMDA receptors and increases the inhibitory potency on NR2A/GRIN2A NMDA receptors. Hydroxylation of Pro-88 locally disrupts a small region of the divalent cation-induced alpha-helix but does not destabilize the entire helix. Expressed by the venom duct.

It is found in the secreted. Functionally, conantokins inhibit N-methyl-D-aspartate (NMDA) receptors. This toxin has antagonist activity on the NR2B/GRIN2B subunit (IC(50)=0.1 uM). In vivo, when delivered into the brain, is active has anticonvulsant activity in the model of epilepsy in mice. This Conus rolani (Cone snail) protein is Conantokin Rl-B.